We begin with the raw amino-acid sequence, 705 residues long: Choline transporter-like protein 2 (705 aa).

Residues 1-33 (MGKDSQHYYGKHGTPQKYDPTFKGPIYNRGCTD) lie on the Cytoplasmic side of the membrane. At threonine 14 the chain carries Phosphothreonine. The chain crosses the membrane as a helical span at residues 34–54 (IICCVLLFLAIVGYVAVGIIA). The Extracellular segment spans residues 55-232 (WTHGDPRKVI…QIFEDYTVSW (178 aa)). Residues asparagine 187 and asparagine 200 are each glycosylated (N-linked (GlcNAc...) asparagine). Residues 233–253 (YWIVIGLVIAMLLSLMFIVLL) traverse the membrane as a helical segment. The Cytoplasmic portion of the chain corresponds to 254–256 (RFL). The chain crosses the membrane as a helical span at residues 257 to 277 (AGVMVWVMIVMVILVLGYGIF). The Extracellular portion of the chain corresponds to 278-315 (HCYAEYSRLRGEAGSDVSLVDLGFQTDLRVYLHLRQTW). The helical transmembrane segment at 316–336 (MAFMIILSILEVVIILLLIFL) threads the bilayer. Topologically, residues 337 to 364 (RKRILIAIALIKEASRAVGHVMCSMLYP) are cytoplasmic. A helical transmembrane segment spans residues 365–385 (LVTFFLLCLCIAYWASTSVFL). Residues 386–453 (STSNVAVYKI…LQIFNAFMFF (68 aa)) are Extracellular-facing. N-linked (GlcNAc...) asparagine glycosylation is present at asparagine 416. Residues 454-476 (WLANFVLALGQVTLAGAFASYYW) traverse the membrane as a helical segment. The Cytoplasmic portion of the chain corresponds to 477–503 (AMRKPDDMPAFPLFSAFGRALRYHTGS). Residues 504–524 (LAFGSLILAIVQIIRVMLEYL) form a helical membrane-spanning segment. Topologically, residues 525–562 (DQRLKAAQNKFAKFLMVCLKCCFWCLEKFIKFLNRNAY) are extracellular. A helical membrane pass occupies residues 563–583 (IMIAIYGTNFCTSARNAFFLL). The Cytoplasmic portion of the chain corresponds to 584-598 (MRNIIRVAVLDKVTD). The chain crosses the membrane as a helical span at residues 599–619 (FLFLLGKLLIVGSVGILAFFF). The Extracellular portion of the chain corresponds to 620–637 (FTHRIRIVQDTAPPLNYY). The helical transmembrane segment at 638–658 (WVPILTVIIGSYLIAHGFFSV) threads the bilayer. Over 659 to 705 (YGMCVDTLFLCFLEDLERNDGSAERPYFMSSTLKKLLNKTNKKVAES) the chain is Cytoplasmic.

The protein belongs to the CTL (choline transporter-like) family. In terms of assembly, interacts with COCH. Post-translationally, N-glycosylated.

Its subcellular location is the cell membrane. The protein localises to the mitochondrion outer membrane. It catalyses the reaction choline(out) + n H(+)(in) = choline(in) + n H(+)(out). It carries out the reaction ethanolamine(out) + n H(+)(in) = ethanolamine(in) + n H(+)(out). In terms of biological role, exhibits choline transporter activity, as choline/H+ antiporter. Also acts as a low-affinity ethanolamine/H+ antiporter, regulating the supply of extracellular ethanolamine (Etn) for the CDP-Etn pathway, redistribute intracellular Etn and balance the CDP-Cho and CDP-Etn arms of the Kennedy pathway. The polypeptide is Choline transporter-like protein 2 (Slc44a2) (Rattus norvegicus (Rat)).